A 24-amino-acid polypeptide reads, in one-letter code: Heptapoietin A light chain (24 aa).

As to quaternary structure, heterodimer of a heavy and a light chain linked by disulfide bond(s).

HPTA is an acidic heparin-binding growth factor for hepatocytes. The polypeptide is Heptapoietin A light chain (Oryctolagus cuniculus (Rabbit)).